Consider the following 357-residue polypeptide: Phosphate acyltransferase (357 aa).

The protein belongs to the PlsX family. In terms of assembly, homodimer. Probably interacts with PlsY.

It localises to the cytoplasm. The enzyme catalyses a fatty acyl-[ACP] + phosphate = an acyl phosphate + holo-[ACP]. The protein operates within lipid metabolism; phospholipid metabolism. Its function is as follows. Catalyzes the reversible formation of acyl-phosphate (acyl-PO(4)) from acyl-[acyl-carrier-protein] (acyl-ACP). This enzyme utilizes acyl-ACP as fatty acyl donor, but not acyl-CoA. The chain is Phosphate acyltransferase from Roseobacter denitrificans (strain ATCC 33942 / OCh 114) (Erythrobacter sp. (strain OCh 114)).